Reading from the N-terminus, the 99-residue chain is uncharacterized protein (99 aa).

Residues 1-17 (MMMNSFFPAMALMVLVG) form the signal peptide. Cysteine 18 carries N-palmitoyl cysteine lipidation. Cysteine 18 carries the S-diacylglycerol cysteine lipid modification.

Its subcellular location is the cell membrane. This is an uncharacterized protein from Escherichia coli O157:H7.